Reading from the N-terminus, the 525-residue chain is Sensory neuron membrane protein 1 (525 aa).

Residues 1–11 (MLLPKPLKYAA) lie on the Cytoplasmic side of the membrane. A helical transmembrane segment spans residues 12 to 32 (IGGGVFVFGILIGWVIFPVIL). Residues 33-456 (KSQIKKEMAL…LKHQLFIPKR (424 aa)) lie on the Extracellular side of the membrane. Residues N67, N105, and N229 are each glycosylated (N-linked (GlcNAc...) asparagine). Cystine bridges form between C268-C333, C297-C352, and C335-C341. Residue N440 is glycosylated (N-linked (GlcNAc...) asparagine). A helical membrane pass occupies residues 457-477 (IVGVIRWWMVSFGLIAVLAGV). Topologically, residues 478–525 (MYHFKDNIMGWAAKGESTTAKVNPEDGSNEQRGVSVIGQDREPPKVTM) are cytoplasmic. The segment at 496–525 (TAKVNPEDGSNEQRGVSVIGQDREPPKVTM) is disordered. The span at 516-525 (QDREPPKVTM) shows a compositional bias: basic and acidic residues.

It belongs to the CD36 family. Principal component of the olfactory cilia membrane. Localizes to the somata, dendritic neck and cilia of the olfactory neurons (at protein level). Not detected in the axons of ORNs, the cytoplasm of auxiliary cells or non-sensory structures. Expression is universal among ORNs but differential between neuron and sensillum types.

The protein localises to the cell membrane. Its function is as follows. Plays an olfactory role that is not restricted to pheromone sensitivity. May be involved in the odor detection properties of the olfactory receptor neurons (ORNs) rather than their differentiation and growth. The chain is Sensory neuron membrane protein 1 from Antheraea polyphemus (Polyphemus moth).